The following is a 551-amino-acid chain: Glucans biosynthesis protein D (551 aa).

The tat-type signal signal peptide spans 1–32 (MDRRRFIKGSMAMAAVCGTSGIASLFSQAAFA).

The protein belongs to the OpgD/OpgG family. Post-translationally, predicted to be exported by the Tat system. The position of the signal peptide cleavage has not been experimentally proven.

Its subcellular location is the periplasm. The protein operates within glycan metabolism; osmoregulated periplasmic glucan (OPG) biosynthesis. Probably involved in the control of the structural glucose backbone of osmoregulated periplasmic glucans (OPGs). The sequence is that of Glucans biosynthesis protein D (mdoD) from Shigella flexneri.